The following is a 63-amino-acid chain: Large ribosomal subunit protein uL30 (63 aa).

This sequence belongs to the universal ribosomal protein uL30 family. In terms of assembly, part of the 50S ribosomal subunit.

This Natranaerobius thermophilus (strain ATCC BAA-1301 / DSM 18059 / JW/NM-WN-LF) protein is Large ribosomal subunit protein uL30.